The primary structure comprises 350 residues: Methionine import ATP-binding protein MetN (350 aa).

The region spanning 2–241 (IQIKNLKKEY…PQAPVTRSFV (240 aa)) is the ABC transporter domain. An ATP-binding site is contributed by 38–45 (GHSGAGKS).

Belongs to the ABC transporter superfamily. Methionine importer (TC 3.A.1.24) family. As to quaternary structure, the complex is composed of two ATP-binding proteins (MetN), two transmembrane proteins (MetI) and a solute-binding protein (MetQ).

It localises to the cell inner membrane. It catalyses the reaction L-methionine(out) + ATP + H2O = L-methionine(in) + ADP + phosphate + H(+). It carries out the reaction D-methionine(out) + ATP + H2O = D-methionine(in) + ADP + phosphate + H(+). Part of the ABC transporter complex MetNIQ involved in methionine import. Responsible for energy coupling to the transport system. The protein is Methionine import ATP-binding protein MetN of Francisella tularensis subsp. tularensis (strain FSC 198).